We begin with the raw amino-acid sequence, 1371 residues long: Probable serine/threonine-protein kinase DDB_G0293292 (1371 aa).

2 Protein kinase domains span residues 9 to 269 (NKIL…HPNT) and 1131 to 1371 (FKEV…QPTL). Residues 15–23 (IDDGNTKRK) and Lys39 each bind ATP. Residue Asp143 is the Proton acceptor of the active site.

Belongs to the protein kinase superfamily. Ser/Thr protein kinase family.

It catalyses the reaction L-seryl-[protein] + ATP = O-phospho-L-seryl-[protein] + ADP + H(+). The catalysed reaction is L-threonyl-[protein] + ATP = O-phospho-L-threonyl-[protein] + ADP + H(+). This chain is Probable serine/threonine-protein kinase DDB_G0293292, found in Dictyostelium discoideum (Social amoeba).